Here is a 707-residue protein sequence, read N- to C-terminus: MSKKLSLEERLSLATKKGRKKNKRSTSNLSSPSPVVLSNNEQESARTSIDDAAAGVVSIDNAENIDDPAVRSESTVEGDTGKADSIAVDDVVHPDHNRTDCFDDTMVSLPTWLPKNYTEFTVEELVKEISPEYLRLNKQIDDLTNELNRKSQIETTDSSFFKLIKEKDDLIDQLRKEGAKLAETELRQSNQIKALRTKVKDLEYEVSELNDSSAQSVENYNELQSLYHNIQGQLAEATNKLKDADKQKESLETLEKNIKEKDDLITILQQSLDNMRTLLEKEKSEFQTEKKALQEATVDQVTTLETKLEQLRIELDSSTQNLDAKSNRDFVDDQQSYEEKQHASFQYNRLKEQLESSKANWDSIEYALNTKIVNLENRFESTMKEKNDIEEKYQTALRSSETLGKQLEKEKENHSKAVLEVKDLERRAETLKSSLQSISDDYNLLKKKYEIQRSQLEQKENELKPHQENSNEKIIDKIPVELTDSLNSMEGNIEDEWTLPQENSMLSLSMSKLGELESDPSLKPIYNESHETICSEESQHFDRKNVDFSIDDIPEEAAALQAIREGESMNSLNNTSIPYRRASVQLSNSNGHISAHLVNKLSTELKRLEGELSASKELYDNLLKEKTKANDEILRLLEENDKFNEVNKQKDDLLKRVEQMQSKLETSLQLLGEKTEQVEELENDVSDLKEMMHQQVQQMVEMQGKMR.

Over residues 1–11 (MSKKLSLEERL) the composition is skewed to basic and acidic residues. The interval 1–52 (MSKKLSLEERLSLATKKGRKKNKRSTSNLSSPSPVVLSNNEQESARTSIDDA) is disordered. N-acetylserine is present on Ser2. Positions 27–40 (SNLSSPSPVVLSNN) are enriched in low complexity. Positions 122-473 (VEELVKEISP…KPHQENSNEK (352 aa)) form a coiled coil. 7 positions are modified to phosphoserine: Ser151, Ser538, Ser549, Ser568, Ser571, Ser576, and Ser589. The stretch at 594-706 (SAHLVNKLST…QQMVEMQGKM (113 aa)) forms a coiled coil.

This sequence belongs to the SGM1 family. Interacts with YPT6.

Its subcellular location is the golgi apparatus. Functionally, required for normal growth rate on galactose and mannose. The protein is Protein SGM1 (SGM1) of Saccharomyces cerevisiae (strain ATCC 204508 / S288c) (Baker's yeast).